We begin with the raw amino-acid sequence, 131 residues long: Small ribosomal subunit protein uS8 (131 aa).

This sequence belongs to the universal ribosomal protein uS8 family. As to quaternary structure, part of the 30S ribosomal subunit. Contacts proteins S5 and S12.

One of the primary rRNA binding proteins, it binds directly to 16S rRNA central domain where it helps coordinate assembly of the platform of the 30S subunit. The chain is Small ribosomal subunit protein uS8 from Burkholderia mallei (strain NCTC 10247).